The primary structure comprises 324 residues: NADH-cytochrome b5 reductase 1 (324 aa).

Residues 49-69 (LNIVLAFVVGLIGSVVVLLYF) traverse the membrane as a helical segment. Residues 81-184 (TQWQQYRLME…KGPKGQMRYA (104 aa)) form the FAD-binding FR-type domain. Residues 164–179 (GSMKIGDLLSVKGPKG) and 190–222 (HIGMIAGGTGLTPCLQIIRAALKNPADKTQIDF) each bind FAD.

This sequence belongs to the flavoprotein pyridine nucleotide cytochrome reductase family. As to quaternary structure, monomer. Component of the 2-(3-amino-3-carboxypropyl)histidine synthase complex composed of DPH1, DPH2, DPH3 and a NADH-dependent reductase, predominantly CBR1. FAD is required as a cofactor.

It localises to the mitochondrion outer membrane. It catalyses the reaction 2 Fe(III)-[cytochrome b5] + NADH = 2 Fe(II)-[cytochrome b5] + NAD(+) + H(+). The catalysed reaction is 2 Fe(3+)-[Dph3] + NADH = 2 Fe(2+)-[Dph3] + NAD(+) + H(+). Its pathway is protein modification; peptidyl-diphthamide biosynthesis. Its function is as follows. NADH-dependent reductase for DPH3 and cytochrome b5. Required for the first step of diphthamide biosynthesis, a post-translational modification of histidine which occurs in elongation factor 2. DPH1 and DPH2 transfer a 3-amino-3-carboxypropyl (ACP) group from S-adenosyl-L-methionine (SAM) to a histidine residue, the reaction is assisted by a reduction system comprising DPH3 and a NADH-dependent reductase, predominantly CBR1. By reducing DPH3, also involved in the formation of the tRNA wobble base modification mcm5s 2U (5-methoxycarbonylmethyl-2-thiouridine), mediated by the elongator complex. The cytochrome b5/NADH cytochrome b5 reductase electron transfer system supports the catalytic activity of several sterol biosynthetic enzymes. This chain is NADH-cytochrome b5 reductase 1 (CBR1), found in Mycosarcoma maydis (Corn smut fungus).